The following is a 300-amino-acid chain: UDP-N-acetylenolpyruvoylglucosamine reductase (300 aa).

One can recognise an FAD-binding PCMH-type domain in the interval 29–193; it reads TGGPADLLVF…LSATFKLRSG (165 aa). Arg172 is a catalytic residue. Catalysis depends on Ser222, which acts as the Proton donor. The active site involves Glu292.

This sequence belongs to the MurB family. Requires FAD as cofactor.

The protein resides in the cytoplasm. It carries out the reaction UDP-N-acetyl-alpha-D-muramate + NADP(+) = UDP-N-acetyl-3-O-(1-carboxyvinyl)-alpha-D-glucosamine + NADPH + H(+). The protein operates within cell wall biogenesis; peptidoglycan biosynthesis. Its function is as follows. Cell wall formation. This is UDP-N-acetylenolpyruvoylglucosamine reductase from Pediococcus pentosaceus (strain ATCC 25745 / CCUG 21536 / LMG 10740 / 183-1w).